Here is a 100-residue protein sequence, read N- to C-terminus: Large ribosomal subunit protein uL23 (100 aa).

It belongs to the universal ribosomal protein uL23 family. In terms of assembly, part of the 50S ribosomal subunit. Contacts protein L29, and trigger factor when it is bound to the ribosome.

One of the early assembly proteins it binds 23S rRNA. One of the proteins that surrounds the polypeptide exit tunnel on the outside of the ribosome. Forms the main docking site for trigger factor binding to the ribosome. This chain is Large ribosomal subunit protein uL23, found in Vibrio vulnificus (strain CMCP6).